The chain runs to 884 residues: MADAAVELPGRLAILPFRNKVLLPGAIVRIRCTNPSSVKLVEQELWQREEKGLIGVLPVHDSEAAGSLLSPGVGSDSGEGGSKAPGGSAGESTKQDTKNGKETIHWHSRGVAARALHLSRGVEKPSGRVTYIVVLEGLCRFSVQELSARGSYHVARVSRLDMTKTELEHAEQDPDLIALSRQFKATAMELISVLEQKQKTVGRTKVLLETVPVYRLADIFVASFEIGFEEQLSMLDSVDLKVRLSKATELVDRHLQSILVAEKITQKVEGQLSKSQKEFLLRQQMRAIKEELGDNDDDEDDVAALERKMQNAGMPANIWKHAQRELRRLRKMQPQQPGYSSSRTYLELLAELPWQKVSEERELDLRAAKESLDRDHYGLTKVKQRIIEYLAVRKLKPDARGPVLCFVGPPGVGKTSLASSIAKALNRKFIRISLGGVKDEADIRGHRRTYIGSMPGRLIDGLKRVSVSNPVMLLDEIDKTGSDVRGDPASALLEVLDPEQNKTFNDHYLNVPFDLSKVIFVATANRMQPIPPPLLDRMEVIELPGYTPEEKLKIAMKHLIPRVLEQHGLSSTYLQIPEAMVRLIIERYTREAGVRNLERNLAALARAAAVKVAEQDSALRLGKEIQPITTTLLDSRLADGGEVEMEVIPMGQDISNTYENPSPMIVDEAMLEKVLGPPRFDDSEAADRVASPGVSVGLVWTSFGGEVQFVEATAMVGKGDLHLTGQLGDVIKESAQLALTWVRARAADLNLSPTSDINLLESRDIHIHFPAGAVPKDGPSAGVTLVTSLVSLFSHRKVRADTAMTGEMTLRGLVLPVGGVKDKVLAAHRYGIKRVILPERNMKDLAEVPAPILSGLEILLVKRIEEVLDHAFEGGCPLRPHSKL.

The 244-residue stretch at 12–255 (LAILPFRNKV…KATELVDRHL (244 aa)) folds into the Lon N-terminal domain. Residues 67 to 101 (SLLSPGVGSDSGEGGSKAPGGSAGESTKQDTKNGK) are disordered. A compositionally biased stretch (gly residues) spans 75-89 (SDSGEGGSKAPGGSA). 408–415 (GPPGVGKT) serves as a coordination point for ATP. A Lon proteolytic domain is found at 689-874 (VASPGVSVGL…EEVLDHAFEG (186 aa)). Residues serine 780 and lysine 823 contribute to the active site. Residues 882 to 884 (SKL) carry the Microbody targeting signal motif.

The protein belongs to the peptidase S16 family.

The protein resides in the peroxisome matrix. The enzyme catalyses Hydrolysis of proteins in presence of ATP.. Its function is as follows. ATP-dependent serine protease that mediates the selective degradation of misfolded and unassembled polypeptides in the peroxisomal matrix. Necessary for type 2 peroxisome targeting signal (PTS2)-containing protein processing and facilitates peroxisome matrix protein import. The chain is Lon protease homolog 2, peroxisomal from Oryza sativa subsp. japonica (Rice).